Here is a 349-residue protein sequence, read N- to C-terminus: Glycerol-3-phosphate dehydrogenase [NAD(P)+] (349 aa).

NADPH-binding residues include tryptophan 16, arginine 36, and lysine 110. The sn-glycerol 3-phosphate site is built by lysine 110, glycine 138, and threonine 140. Position 142 (alanine 142) interacts with NADPH. Residues lysine 193, aspartate 246, serine 256, arginine 257, and asparagine 258 each contribute to the sn-glycerol 3-phosphate site. The Proton acceptor role is filled by lysine 193. Arginine 257 is a binding site for NADPH. Residues valine 281 and glutamate 283 each contribute to the NADPH site.

It belongs to the NAD-dependent glycerol-3-phosphate dehydrogenase family.

The protein resides in the cytoplasm. The catalysed reaction is sn-glycerol 3-phosphate + NAD(+) = dihydroxyacetone phosphate + NADH + H(+). It carries out the reaction sn-glycerol 3-phosphate + NADP(+) = dihydroxyacetone phosphate + NADPH + H(+). It functions in the pathway membrane lipid metabolism; glycerophospholipid metabolism. Functionally, catalyzes the reduction of the glycolytic intermediate dihydroxyacetone phosphate (DHAP) to sn-glycerol 3-phosphate (G3P), the key precursor for phospholipid synthesis. The polypeptide is Glycerol-3-phosphate dehydrogenase [NAD(P)+] (Rhodospirillum rubrum (strain ATCC 11170 / ATH 1.1.1 / DSM 467 / LMG 4362 / NCIMB 8255 / S1)).